Here is a 292-residue protein sequence, read N- to C-terminus: Elongation factor Ts (292 aa).

Residues threonine 82–valine 85 form an involved in Mg(2+) ion dislocation from EF-Tu region.

The protein belongs to the EF-Ts family.

It is found in the cytoplasm. Its function is as follows. Associates with the EF-Tu.GDP complex and induces the exchange of GDP to GTP. It remains bound to the aminoacyl-tRNA.EF-Tu.GTP complex up to the GTP hydrolysis stage on the ribosome. The sequence is that of Elongation factor Ts from Legionella pneumophila (strain Paris).